Reading from the N-terminus, the 364-residue chain is tRNA 2-selenouridine synthase (364 aa).

Positions leucine 14–isoleucine 137 constitute a Rhodanese domain. Cysteine 97 serves as the catalytic S-selanylcysteine intermediate.

It belongs to the SelU family. In terms of assembly, monomer.

It carries out the reaction 5-methylaminomethyl-2-thiouridine(34) in tRNA + selenophosphate + (2E)-geranyl diphosphate + H2O + H(+) = 5-methylaminomethyl-2-selenouridine(34) in tRNA + (2E)-thiogeraniol + phosphate + diphosphate. The enzyme catalyses 5-methylaminomethyl-2-thiouridine(34) in tRNA + (2E)-geranyl diphosphate = 5-methylaminomethyl-S-(2E)-geranyl-thiouridine(34) in tRNA + diphosphate. It catalyses the reaction 5-methylaminomethyl-S-(2E)-geranyl-thiouridine(34) in tRNA + selenophosphate + H(+) = 5-methylaminomethyl-2-(Se-phospho)selenouridine(34) in tRNA + (2E)-thiogeraniol. The catalysed reaction is 5-methylaminomethyl-2-(Se-phospho)selenouridine(34) in tRNA + H2O = 5-methylaminomethyl-2-selenouridine(34) in tRNA + phosphate. Involved in the post-transcriptional modification of the uridine at the wobble position (U34) of tRNA(Lys), tRNA(Glu) and tRNA(Gln). Catalyzes the conversion of 2-thiouridine (S2U-RNA) to 2-selenouridine (Se2U-RNA). Acts in a two-step process involving geranylation of 2-thiouridine (S2U) to S-geranyl-2-thiouridine (geS2U) and subsequent selenation of the latter derivative to 2-selenouridine (Se2U) in the tRNA chain. The sequence is that of tRNA 2-selenouridine synthase from Shigella dysenteriae serotype 1 (strain Sd197).